Here is a 238-residue protein sequence, read N- to C-terminus: DNA N-6-adenine-methyltransferase (238 aa).

The protein belongs to the N(4)/N(6)-methyltransferase family.

The catalysed reaction is a 2'-deoxyadenosine in DNA + S-adenosyl-L-methionine = an N(6)-methyl-2'-deoxyadenosine in DNA + S-adenosyl-L-homocysteine + H(+). Its function is as follows. Methyltransferase that methylates adenine residues in the dsDNA sequence 5'-GATC-3'. May prevent degradation of viral DNA by the host restriction-modification antiviral defense system. The sequence is that of DNA N-6-adenine-methyltransferase from Escherichia phage T1 (Bacteriophage T1).